The chain runs to 104 residues: Type VII secretion system extracellular protein B (104 aa).

Belongs to the WXG100 family. In terms of assembly, homodimer. When mixed with EsxA does not form heterodimers.

The protein resides in the secreted. In terms of biological role, virulence factor that is important for the establishment of infection in the host. EsxB is required for EsxA synthesis as well as secretion. Mediates together with EsxA the release of S.aureus from the host cell. Also inhibits host cytokine production and thus modulates dendritic cell-mediated immunity. In Staphylococcus aureus (strain Mu50 / ATCC 700699), this protein is Type VII secretion system extracellular protein B.